Reading from the N-terminus, the 523-residue chain is MIMYGGGGAGKDGGSTNHLSDGGVILKKGPWTAAEDEILAAYVRENGEGNWNAVQKNTGLARCGKSCRLRWANHLRPNLKKGSFTGDEERLIIQLHAQLGNKWARMAAQLPGRTDNEIKNYWNTRLKRLLRQGLPLYPPDIIPNHQLHPHPHHQQQQQHNHHHHHHQQQQQHQQMYFQPQSSQRNTPSSSPLPSPTPANAKSSSSFTFHTTTANLLHPLSPHTPNTPSQLSSTPPPPPLSSPLCSPRNNQYPTLPLFALPRSQINNNNNGNFTFPRPPPLLQPPSSLFAKRYNNANTPLNCINRVSTAPFSPVSRDSYTSFLTLPYPSPTAQTATYHNTNNPYSSSPSFSLNPSSSSYPTSTSSPSFLHSHYTPSSTSFHTNPVYSMKQEQLPSNQIPQIDGFNNVNNFTDNERQNHNLNSSGAHRRSSSCSLLEDVFEEAEALASGGRGRPPKRRQLTASLPNHNNNTNNNDNFFSVSFGHYDSSDNLCSLQGKTKTTYNTSNLNYSSLQVKCKMFMIKTQI.

HTH myb-type domains are found at residues 23-75 (GVIL…ANHL) and 76-130 (RPNL…KRLL). 2 DNA-binding regions (H-T-H motif) span residues 51-75 (WNAV…ANHL) and 103-126 (WARM…NTRL). 4 disordered regions span residues 140 to 254 (DIIP…YPTL), 332 to 373 (QTAT…SHYT), 396 to 426 (QIPQ…GAHR), and 444 to 470 (LASG…NNTN). Basic residues predominate over residues 147–167 (LHPHPHHQQQQQHNHHHHHHQ). The span at 175 to 185 (MYFQPQSSQRN) shows a compositional bias: polar residues. 3 stretches are compositionally biased toward low complexity: residues 202–212 (SSSSFTFHTTT), 223–232 (TPNTPSQLSS), and 341–368 (NPYS…PSFL). Polar residues predominate over residues 396–410 (QIPQIDGFNNVNNFT).

Expressed in pollen grains and pollen tube. Mostly expressed in mature pollen grains, and, to a lower extent, in inflorescences and siliques.

The protein localises to the nucleus. In terms of biological role, transcription activator. Binds to 5'-CAACTGTC-3' and/or 5'-TAACAAA-3' motif in target gene promoter to promote their expression. Together with MYB97 and MYB101, functions as a male factor that controls pollen tube-synergid interaction in fertilization. Required for pollen tube growth arrest and sperm cell release in the female gametophyte, probably via the regulation of pollen tube-specific gene expression. The polypeptide is Transcription factor MYB120 (Arabidopsis thaliana (Mouse-ear cress)).